The chain runs to 234 residues: (5-formylfuran-3-yl)methyl phosphate synthase (234 aa).

The Schiff-base intermediate with substrate role is filled by K27. K85 serves as the catalytic Proton acceptor.

It belongs to the MfnB family.

It carries out the reaction 2 D-glyceraldehyde 3-phosphate = 4-(hydroxymethyl)-2-furancarboxaldehyde phosphate + phosphate + 2 H2O. The protein operates within cofactor biosynthesis; methanofuran biosynthesis. Catalyzes the formation of 4-(hydroxymethyl)-2-furancarboxaldehyde phosphate (4-HFC-P) from two molecules of glyceraldehyde-3-P (GA-3-P). The protein is (5-formylfuran-3-yl)methyl phosphate synthase of Methanosarcina barkeri (strain Fusaro / DSM 804).